Consider the following 431-residue polypeptide: Serine--tRNA ligase (431 aa).

238 to 240 is a binding site for L-serine; sequence TAE. Residue 269-271 coordinates ATP; it reads RSE. Glu292 contacts L-serine. ATP is bound at residue 356–359; the sequence is EISS. Ser391 is an L-serine binding site.

It belongs to the class-II aminoacyl-tRNA synthetase family. Type-1 seryl-tRNA synthetase subfamily. As to quaternary structure, homodimer. The tRNA molecule binds across the dimer.

Its subcellular location is the cytoplasm. The enzyme catalyses tRNA(Ser) + L-serine + ATP = L-seryl-tRNA(Ser) + AMP + diphosphate + H(+). The catalysed reaction is tRNA(Sec) + L-serine + ATP = L-seryl-tRNA(Sec) + AMP + diphosphate + H(+). The protein operates within aminoacyl-tRNA biosynthesis; selenocysteinyl-tRNA(Sec) biosynthesis; L-seryl-tRNA(Sec) from L-serine and tRNA(Sec): step 1/1. Functionally, catalyzes the attachment of serine to tRNA(Ser). Is also able to aminoacylate tRNA(Sec) with serine, to form the misacylated tRNA L-seryl-tRNA(Sec), which will be further converted into selenocysteinyl-tRNA(Sec). This is Serine--tRNA ligase from Bdellovibrio bacteriovorus (strain ATCC 15356 / DSM 50701 / NCIMB 9529 / HD100).